A 480-amino-acid chain; its full sequence is Endoplasmic reticulum lectin 1 (480 aa).

The first 27 residues, 1 to 27, serve as a signal peptide directing secretion; it reads MRRSDRFPCAGASLLVVLCGVFPSSFG. MRH domains follow at residues 108–245 and 339–466; these read SSCS…LCNH and SYCF…ICKI. An intrachain disulfide couples cysteine 110 to cysteine 123. The tract at residues 152–172 is disordered; that stretch reads VKKSPSEAGENQEDKERTEGH. The segment covering 163–172 has biased composition (basic and acidic residues); sequence QEDKERTEGH. Disulfide bonds link cysteine 198-cysteine 231, cysteine 214-cysteine 243, cysteine 341-cysteine 354, cysteine 418-cysteine 452, and cysteine 433-cysteine 464.

Its subcellular location is the endoplasmic reticulum lumen. Probable lectin that binds selectively to improperly folded lumenal proteins. May function in endoplasmic reticulum quality control and endoplasmic reticulum-associated degradation (ERAD) of both non-glycosylated proteins and glycoproteins. The sequence is that of Endoplasmic reticulum lectin 1 (erlec1) from Xenopus laevis (African clawed frog).